A 217-amino-acid chain; its full sequence is Small ribosomal subunit protein uS3c (217 aa).

Residues 43–117 (IKNYVQKNRK…KLNIAITRIA (75 aa)) enclose the KH type-2 domain.

The protein belongs to the universal ribosomal protein uS3 family. Part of the 30S ribosomal subunit.

It localises to the plastid. The protein localises to the chloroplast. The sequence is that of Small ribosomal subunit protein uS3c (rps3) from Ranunculus macranthus (Large buttercup).